We begin with the raw amino-acid sequence, 85 residues long: Large ribosomal subunit protein eL43 (85 aa).

The C4-type zinc finger occupies 38 to 59; it reads CPVCGRKAVRRISTGIWQCQKC.

Belongs to the eukaryotic ribosomal protein eL43 family. It depends on Zn(2+) as a cofactor.

This chain is Large ribosomal subunit protein eL43, found in Thermococcus sibiricus (strain DSM 12597 / MM 739).